The primary structure comprises 88 residues: Acyl-CoA-binding domain-containing protein 7 (88 aa).

Residues 3–88 (LQADFDKAAK…AKELIEKYGI (86 aa)) enclose the ACB domain. Residues Arg-15, 30–34 (YGLYK), Lys-56, and Tyr-75 contribute to the an acyl-CoA site.

The protein belongs to the ACBD7 family.

Binds medium- and long-chain acyl-CoA esters. This Bos taurus (Bovine) protein is Acyl-CoA-binding domain-containing protein 7 (ACBD7).